A 375-amino-acid chain; its full sequence is Chaperone protein DnaJ (375 aa).

A J domain is found at 5–70 (DYYEVLGVSR…QKRAAYDQFG (66 aa)). The CR-type zinc finger occupies 131–209 (GTTVKIRVPS…CHGSGYVEEQ (79 aa)). Zn(2+) is bound by residues cysteine 144, cysteine 147, cysteine 161, cysteine 164, cysteine 183, cysteine 186, cysteine 197, and cysteine 200. CXXCXGXG motif repeat units lie at residues 144–151 (CKSCSGSG), 161–168 (CGTCNGAG), 183–190 (CPRCRGAG), and 197–204 (CRSCHGSG).

This sequence belongs to the DnaJ family. As to quaternary structure, homodimer. Requires Zn(2+) as cofactor.

It is found in the cytoplasm. Participates actively in the response to hyperosmotic and heat shock by preventing the aggregation of stress-denatured proteins and by disaggregating proteins, also in an autonomous, DnaK-independent fashion. Unfolded proteins bind initially to DnaJ; upon interaction with the DnaJ-bound protein, DnaK hydrolyzes its bound ATP, resulting in the formation of a stable complex. GrpE releases ADP from DnaK; ATP binding to DnaK triggers the release of the substrate protein, thus completing the reaction cycle. Several rounds of ATP-dependent interactions between DnaJ, DnaK and GrpE are required for fully efficient folding. Also involved, together with DnaK and GrpE, in the DNA replication of plasmids through activation of initiation proteins. In Hahella chejuensis (strain KCTC 2396), this protein is Chaperone protein DnaJ.